The sequence spans 509 residues: Surface lipoprotein assembly modifier (509 aa).

The N-terminal stretch at 1–32 is a signal peptide; that stretch reads MNLMINLKPLTFLPFFGRLVFLSGVIYNTAWA. The tract at residues 33–204 is N-terminal domain; it reads NTVIPVDNSR…SYIDTINQRD (172 aa). Residues 43–72 are disordered; sequence PDETFSQTSPKQHLFSQKPKPTEPTSSASS. The span at 46 to 57 shows a compositional bias: polar residues; that stretch reads TFSQTSPKQHLF. One copy of the TPR repeat lies at 120-153; the sequence is FLLKWAQAVVARKQGKLNESVRLYRQIIAEKPNL. Positions 205 to 509 are C-terminal probable beta barrel; it reads SWNVYGGVNY…RIYLTFSKTF (305 aa). 14 beta stranded membrane passes run 206–216, 245–256, 261–270, 284–294, 298–308, 331–341, 345–355, 371–381, 386–395, 408–417, 423–432, 461–470, 476–485, and 499–509; these read WNVYGGVNYLH, LSYFINLSKNWS, FFTEFSADIN, STRLNLGGGYR, TEVKLMPFVEQ, SGINLDVDYWL, WKISTVLEYTE, YSISNTLIYMP, FWFVGLDYYQ, QGIRLGWGQE, STRLQTSYAT, GVNFTIWHRS, ITPKITWAYQ, and NRIYLTFSKTF.

It belongs to the Slam family.

The protein localises to the cell outer membrane. Functionally, required for correct export to the cell surface of some cell outer membrane lipoproteins (tested with PM1514) upon heterologous expression in E.coli and probably also in Pasteurella. In Pasteurella multocida (strain Pm70), this protein is Surface lipoprotein assembly modifier.